The primary structure comprises 324 residues: Beta-ketoacyl-[acyl-carrier-protein] synthase III (324 aa).

Residues Cys-114 and His-246 contribute to the active site. The ACP-binding stretch occupies residues 247-251 (QANLR). Asn-276 is a catalytic residue.

The protein belongs to the thiolase-like superfamily. FabH family. Homodimer.

The protein resides in the cytoplasm. The enzyme catalyses malonyl-[ACP] + acetyl-CoA + H(+) = 3-oxobutanoyl-[ACP] + CO2 + CoA. Its pathway is lipid metabolism; fatty acid biosynthesis. In terms of biological role, catalyzes the condensation reaction of fatty acid synthesis by the addition to an acyl acceptor of two carbons from malonyl-ACP. Catalyzes the first condensation reaction which initiates fatty acid synthesis and may therefore play a role in governing the total rate of fatty acid production. Possesses both acetoacetyl-ACP synthase and acetyl transacylase activities. Its substrate specificity determines the biosynthesis of branched-chain and/or straight-chain of fatty acids. The sequence is that of Beta-ketoacyl-[acyl-carrier-protein] synthase III from Campylobacter jejuni subsp. jejuni serotype O:6 (strain 81116 / NCTC 11828).